The primary structure comprises 329 residues: Interleukin-12 subunit beta (329 aa).

Residues 1 to 22 (MCHQWLVLSWFSLVLLASPLMA) form the signal peptide. Residues 29–106 (DVYVVELDWY…LSHSHLLLHK (78 aa)) form the Ig-like C2-type domain. Cysteines 50 and 90 form a disulfide. 3 N-linked (GlcNAc...) asparagine glycosylation sites follow: N125, N135, and N223. A Fibronectin type-III domain is found at 238-329 (PPKNLQLKPL…WSEWASVSCS (92 aa)).

This sequence belongs to the IL-12B family. In terms of assembly, heterodimer with IL12A; disulfide-linked. The heterodimer is known as interleukin IL-12. Heterodimer with IL23A; disulfide-linked. The heterodimer is known as interleukin IL-23. Also secreted as a monomer. Interacts with NBR1; this interaction promotes IL-12 secretion.

The protein localises to the secreted. Its function is as follows. Cytokine that can act as a growth factor for activated T and NK cells, enhance the lytic activity of NK/lymphokine-activated killer cells, and stimulate the production of IFN-gamma by resting PBMC. Associates with IL23A to form the IL-23 interleukin, a heterodimeric cytokine which functions in innate and adaptive immunity. IL-23 may constitute with IL-17 an acute response to infection in peripheral tissues. IL-23 binds to a heterodimeric receptor complex composed of IL12RB1 and IL23R, activates the Jak-Stat signaling cascade, stimulates memory rather than naive T-cells and promotes production of pro-inflammatory cytokines. IL-23 induces autoimmune inflammation and thus may be responsible for autoimmune inflammatory diseases and may be important for tumorigenesis. In Equus caballus (Horse), this protein is Interleukin-12 subunit beta (IL12B).